We begin with the raw amino-acid sequence, 331 residues long: 6-phosphogluconolactonase (331 aa).

It belongs to the cycloisomerase 2 family.

It carries out the reaction 6-phospho-D-glucono-1,5-lactone + H2O = 6-phospho-D-gluconate + H(+). Its pathway is carbohydrate degradation; pentose phosphate pathway; D-ribulose 5-phosphate from D-glucose 6-phosphate (oxidative stage): step 2/3. Its function is as follows. Catalyzes the hydrolysis of 6-phosphogluconolactone to 6-phosphogluconate. This chain is 6-phosphogluconolactonase, found in Salmonella choleraesuis (strain SC-B67).